Here is a 96-residue protein sequence, read N- to C-terminus: Fruit-specific protein (96 aa).

Intrachain disulfides connect cysteine 59/cysteine 75, cysteine 63/cysteine 78, and cysteine 69/cysteine 92.

As to expression, fruit specific.

This chain is Fruit-specific protein (2A11), found in Solanum lycopersicum (Tomato).